A 127-amino-acid chain; its full sequence is Probable glycine cleavage system H protein (127 aa).

Positions 24–106 (TAEVGITAFA…FGDGWMLTVE (83 aa)) constitute a Lipoyl-binding domain. Residue lysine 65 is modified to N6-lipoyllysine.

This sequence belongs to the GcvH family. The glycine cleavage system is composed of four proteins: P, T, L and H. (R)-lipoate serves as cofactor.

The glycine cleavage system catalyzes the degradation of glycine. The H protein shuttles the methylamine group of glycine from the P protein to the T protein. The sequence is that of Probable glycine cleavage system H protein from Haloarcula marismortui (strain ATCC 43049 / DSM 3752 / JCM 8966 / VKM B-1809) (Halobacterium marismortui).